The following is a 430-amino-acid chain: Histidine--tRNA ligase (430 aa).

The protein belongs to the class-II aminoacyl-tRNA synthetase family. As to quaternary structure, homodimer.

It is found in the cytoplasm. The catalysed reaction is tRNA(His) + L-histidine + ATP = L-histidyl-tRNA(His) + AMP + diphosphate + H(+). This chain is Histidine--tRNA ligase (hisS), found in Clostridium acetobutylicum (strain ATCC 824 / DSM 792 / JCM 1419 / IAM 19013 / LMG 5710 / NBRC 13948 / NRRL B-527 / VKM B-1787 / 2291 / W).